Reading from the N-terminus, the 131-residue chain is Large ribosomal subunit protein uL14m (131 aa).

It belongs to the universal ribosomal protein uL14 family. Component of the mitochondrial large ribosomal subunit (mt-LSU). Mature N.crassa 74S mitochondrial ribosomes consist of a small (37S) and a large (54S) subunit. The 37S small subunit contains a 16S ribosomal RNA (16S mt-rRNA) and 32 different proteins. The 54S large subunit contains a 23S rRNA (23S mt-rRNA) and 42 different proteins.

It is found in the mitochondrion. Functionally, component of the mitochondrial ribosome (mitoribosome), a dedicated translation machinery responsible for the synthesis of mitochondrial genome-encoded proteins, including at least some of the essential transmembrane subunits of the mitochondrial respiratory chain. The mitoribosomes are attached to the mitochondrial inner membrane and translation products are cotranslationally integrated into the membrane. The sequence is that of Large ribosomal subunit protein uL14m (mrpl38) from Neurospora crassa (strain ATCC 24698 / 74-OR23-1A / CBS 708.71 / DSM 1257 / FGSC 987).